Here is a 712-residue protein sequence, read N- to C-terminus: Polyribonucleotide nucleotidyltransferase (712 aa).

Residues Asp-487 and Asp-493 each coordinate Mg(2+). The KH domain maps to 554–613; sequence PKIITMTINPDKIRDVIGPSGKQINKIIEETGVKIDIEQDGTVFISSINQEMNDKAKKII. One can recognise an S1 motif domain in the interval 623–691; the sequence is GEIYEGKVKR…KQGRVNLSRK (69 aa).

This sequence belongs to the polyribonucleotide nucleotidyltransferase family. Mg(2+) is required as a cofactor.

Its subcellular location is the cytoplasm. The enzyme catalyses RNA(n+1) + phosphate = RNA(n) + a ribonucleoside 5'-diphosphate. Functionally, involved in mRNA degradation. Catalyzes the phosphorolysis of single-stranded polyribonucleotides processively in the 3'- to 5'-direction. The protein is Polyribonucleotide nucleotidyltransferase of Bacillus anthracis.